The following is a 128-amino-acid chain: MRYAIMVTGPAYGTQQASSALQFAHALLNEGHELASVFFYREGVYNANLLTSPASDEYDLVRVWQKLNTQHGVALNICVAAALRRGIIDETEAGRLELPSANLQPGFTLSGLGALAEASLTCDRVVQF.

Cysteine 78 serves as the catalytic Cysteine persulfide intermediate.

This sequence belongs to the DsrE/TusD family. As to quaternary structure, heterohexamer, formed by a dimer of trimers. The hexameric TusBCD complex contains 2 copies each of TusB, TusC and TusD. The TusBCD complex interacts with TusE.

The protein resides in the cytoplasm. In terms of biological role, part of a sulfur-relay system required for 2-thiolation of 5-methylaminomethyl-2-thiouridine (mnm(5)s(2)U) at tRNA wobble positions. Accepts sulfur from TusA and transfers it in turn to TusE. The sequence is that of Sulfurtransferase TusD from Salmonella typhi.